Consider the following 279-residue polypeptide: Ribosomal RNA small subunit methyltransferase J (279 aa).

Residues 138-139 and aspartate 194 contribute to the S-adenosyl-L-methionine site; that span reads ER.

Belongs to the methyltransferase superfamily. RsmJ family.

Its subcellular location is the cytoplasm. The enzyme catalyses guanosine(1516) in 16S rRNA + S-adenosyl-L-methionine = N(2)-methylguanosine(1516) in 16S rRNA + S-adenosyl-L-homocysteine + H(+). Its function is as follows. Specifically methylates the guanosine in position 1516 of 16S rRNA. The chain is Ribosomal RNA small subunit methyltransferase J from Acinetobacter baumannii (strain ACICU).